Here is an 831-residue protein sequence, read N- to C-terminus: DNA ligase (831 aa).

Residues 34 to 38 (DADYD), 83 to 84 (SL), and glutamate 114 each bind NAD(+). Lysine 116 acts as the N6-AMP-lysine intermediate in catalysis. NAD(+) is bound by residues arginine 137, glutamate 174, lysine 291, and lysine 315. Zn(2+) contacts are provided by cysteine 409, cysteine 412, cysteine 427, and cysteine 433. A BRCT domain is found at 749-831 (AHTAPLNGQS…LAFLGQYSAQ (83 aa)).

This sequence belongs to the NAD-dependent DNA ligase family. LigA subfamily. Requires Mg(2+) as cofactor. It depends on Mn(2+) as a cofactor.

It catalyses the reaction NAD(+) + (deoxyribonucleotide)n-3'-hydroxyl + 5'-phospho-(deoxyribonucleotide)m = (deoxyribonucleotide)n+m + AMP + beta-nicotinamide D-nucleotide.. Functionally, DNA ligase that catalyzes the formation of phosphodiester linkages between 5'-phosphoryl and 3'-hydroxyl groups in double-stranded DNA using NAD as a coenzyme and as the energy source for the reaction. It is essential for DNA replication and repair of damaged DNA. The sequence is that of DNA ligase from Xylella fastidiosa (strain 9a5c).